A 279-amino-acid polypeptide reads, in one-letter code: Tryptophan synthase alpha chain (279 aa).

Residues Glu50 and Asp61 each act as proton acceptor in the active site.

Belongs to the TrpA family. Tetramer of two alpha and two beta chains.

The enzyme catalyses (1S,2R)-1-C-(indol-3-yl)glycerol 3-phosphate + L-serine = D-glyceraldehyde 3-phosphate + L-tryptophan + H2O. Its pathway is amino-acid biosynthesis; L-tryptophan biosynthesis; L-tryptophan from chorismate: step 5/5. In terms of biological role, the alpha subunit is responsible for the aldol cleavage of indoleglycerol phosphate to indole and glyceraldehyde 3-phosphate. This Sinorhizobium fredii (strain NBRC 101917 / NGR234) protein is Tryptophan synthase alpha chain.